The sequence spans 614 residues: Sorting nexin-18 (614 aa).

The SH3 domain occupies 1 to 61 (MALRARALYD…PASYVQVIRA (61 aa)). A disordered region spans residues 85–218 (GFEPLPAAPP…SQELGHGEPQ (134 aa)). The segment covering 90 to 101 (PAAPPAAFPPLL) has biased composition (pro residues). Residues 141–151 (SDDDWDDEWDD) are compositionally biased toward acidic residues. A PX domain is found at 266-376 (FQCTIDDPTK…HFLTCPSSTD (111 aa)). Residues arginine 302, lysine 304, and arginine 342 each coordinate a 1,2-diacyl-sn-glycero-3-phospho-(1D-myo-inositol-4,5-bisphosphate). Residues 411 to 614 (LQEVESKIDG…EEALHKYDSV (204 aa)) form the BAR domain.

Belongs to the sorting nexin family. As to quaternary structure, heterodimer with SNX9. Interacts with ITCH. Interacts with dynamin-2 (DNM2), SYNJ1 and WASL. Interacts with the AP-1 complex. Interacts with FCHSD1 (via the F-BAR domain).

It is found in the endomembrane system. The protein resides in the endosome membrane. The protein localises to the recycling endosome membrane. Its subcellular location is the cell membrane. It localises to the cytoplasmic vesicle membrane. Functionally, involved in endocytosis and intracellular vesicle trafficking, both during interphase and at the end of mitosis. Required for efficient progress through mitosis and cytokinesis. Required for normal formation of the cleavage furrow at the end of mitosis. Plays a role in endocytosis via clathrin-coated pits, but also clathrin-independent, actin-dependent fluid-phase endocytosis. Plays a role in macropinocytosis. Binds to membranes enriched in phosphatidylinositol 4,5-bisphosphate and promotes membrane tubulation. Stimulates the GTPase activity of DNM2. Promotes DNM2 location at the plasma membrane. Together with DNM2, involved in autophagosome assembly by regulating trafficking from recycling endosomes of phospholipid scramblase ATG9A. The chain is Sorting nexin-18 from Mus musculus (Mouse).